The sequence spans 486 residues: Membrane-bound lytic murein transglycosylase F (486 aa).

The N-terminal stretch at 1-29 (MFSPTALRPRYAKWLIATGLFLMLSGCVD) is a signal peptide. The interval 30–267 (KPNTLERVKE…RLKDRYYGHV (238 aa)) is non-LT domain. Residues 268–486 (DVLGYMGATT…SKPAQEPAPL (219 aa)) are LT domain. The active site involves glutamate 314.

It in the N-terminal section; belongs to the bacterial solute-binding protein 3 family. This sequence in the C-terminal section; belongs to the transglycosylase Slt family.

The protein resides in the cell outer membrane. It catalyses the reaction Exolytic cleavage of the (1-&gt;4)-beta-glycosidic linkage between N-acetylmuramic acid (MurNAc) and N-acetylglucosamine (GlcNAc) residues in peptidoglycan, from either the reducing or the non-reducing ends of the peptidoglycan chains, with concomitant formation of a 1,6-anhydrobond in the MurNAc residue.. Functionally, murein-degrading enzyme that degrades murein glycan strands and insoluble, high-molecular weight murein sacculi, with the concomitant formation of a 1,6-anhydromuramoyl product. Lytic transglycosylases (LTs) play an integral role in the metabolism of the peptidoglycan (PG) sacculus. Their lytic action creates space within the PG sacculus to allow for its expansion as well as for the insertion of various structures such as secretion systems and flagella. In Pseudomonas fluorescens (strain Pf0-1), this protein is Membrane-bound lytic murein transglycosylase F.